Reading from the N-terminus, the 254-residue chain is Nickel import ATP-binding protein NikD (254 aa).

The 240-residue stretch at 2 to 241 folds into the ABC transporter domain; it reads PQQIELRDIA…PKHAVTRSLV (240 aa). 36–43 serves as a coordination point for ATP; the sequence is GGSGSGKS.

The protein belongs to the ABC transporter superfamily. Nickel importer (TC 3.A.1.5.3) family. As to quaternary structure, the complex is composed of two ATP-binding proteins (NikD and NikE), two transmembrane proteins (NikB and NikC) and a solute-binding protein (NikA).

The protein resides in the cell inner membrane. It catalyses the reaction Ni(2+)(out) + ATP + H2O = Ni(2+)(in) + ADP + phosphate + H(+). Part of the ABC transporter complex NikABCDE involved in nickel import. Responsible for energy coupling to the transport system. The sequence is that of Nickel import ATP-binding protein NikD from Shigella dysenteriae serotype 1 (strain Sd197).